Consider the following 173-residue polypeptide: Orotate phosphoribosyltransferase (173 aa).

5-phospho-alpha-D-ribose 1-diphosphate is bound by residues Arg-87, Lys-88, Lys-91, and Glu-113–Ser-121. 2 residues coordinate orotate: Thr-117 and Arg-145.

This sequence belongs to the purine/pyrimidine phosphoribosyltransferase family. PyrE subfamily. Homodimer. Mg(2+) serves as cofactor.

The catalysed reaction is orotidine 5'-phosphate + diphosphate = orotate + 5-phospho-alpha-D-ribose 1-diphosphate. The protein operates within pyrimidine metabolism; UMP biosynthesis via de novo pathway; UMP from orotate: step 1/2. Its function is as follows. Catalyzes the transfer of a ribosyl phosphate group from 5-phosphoribose 1-diphosphate to orotate, leading to the formation of orotidine monophosphate (OMP). The chain is Orotate phosphoribosyltransferase from Natronomonas pharaonis (strain ATCC 35678 / DSM 2160 / CIP 103997 / JCM 8858 / NBRC 14720 / NCIMB 2260 / Gabara) (Halobacterium pharaonis).